The chain runs to 522 residues: Maturase K (522 aa).

The protein belongs to the intron maturase 2 family. MatK subfamily.

Its subcellular location is the plastid. It localises to the chloroplast. In terms of biological role, usually encoded in the trnK tRNA gene intron. Probably assists in splicing its own and other chloroplast group II introns. In Pillansia templemannii, this protein is Maturase K.